Reading from the N-terminus, the 208-residue chain is Guanylate kinase (208 aa).

The region spanning 8-187 (GVCLVISAPS…AISQARSVLT (180 aa)) is the Guanylate kinase-like domain. 15-22 (APSGAGKS) serves as a coordination point for ATP.

Belongs to the guanylate kinase family.

The protein resides in the cytoplasm. It carries out the reaction GMP + ATP = GDP + ADP. Its function is as follows. Essential for recycling GMP and indirectly, cGMP. This is Guanylate kinase from Gluconobacter oxydans (strain 621H) (Gluconobacter suboxydans).